Here is a 612-residue protein sequence, read N- to C-terminus: DEAD-box ATP-dependent RNA helicase 11 (612 aa).

2 disordered regions span residues 1–70 (MSAS…SGGG) and 83–104 (GAGG…WDRR). At serine 2 the chain carries N-acetylserine. Gly residues-rich tracts occupy residues 61-70 (SGGGGASGGG) and 83-94 (GAGGGGGGGGGW). A Q motif motif is present at residues 151-179 (NTFADIDLGDALNLNIRRCKYVRPTPVQR). Residues 182 to 366 (IPILLAERDL…ADFMSNYIFL (185 aa)) enclose the Helicase ATP-binding domain. 195 to 202 (AQTGSGKT) serves as a coordination point for ATP. Positions 310-313 (DEAD) match the DEAD box motif. One can recognise a Helicase C-terminal domain in the interval 377 to 542 (LITQRVEFVQ…EVPEWLTRYA (166 aa)). The segment at 547-583 (FGGGKKRSGGRFGGRDFRREGSYSRGGGGGGGGGGSD) is disordered. Residues 559-568 (GGRDFRREGS) show a composition bias toward basic and acidic residues. The segment covering 570–583 (SRGGGGGGGGGGSD) has biased composition (gly residues).

This sequence belongs to the DEAD box helicase family. DDX3/DED1 subfamily.

It carries out the reaction ATP + H2O = ADP + phosphate + H(+). This Arabidopsis thaliana (Mouse-ear cress) protein is DEAD-box ATP-dependent RNA helicase 11 (RH11).